Consider the following 237-residue polypeptide: Phosphoribosylaminoimidazole-succinocarboxamide synthase (237 aa).

This sequence belongs to the SAICAR synthetase family.

The enzyme catalyses 5-amino-1-(5-phospho-D-ribosyl)imidazole-4-carboxylate + L-aspartate + ATP = (2S)-2-[5-amino-1-(5-phospho-beta-D-ribosyl)imidazole-4-carboxamido]succinate + ADP + phosphate + 2 H(+). The protein operates within purine metabolism; IMP biosynthesis via de novo pathway; 5-amino-1-(5-phospho-D-ribosyl)imidazole-4-carboxamide from 5-amino-1-(5-phospho-D-ribosyl)imidazole-4-carboxylate: step 1/2. This chain is Phosphoribosylaminoimidazole-succinocarboxamide synthase, found in Shigella dysenteriae serotype 1 (strain Sd197).